Consider the following 185-residue polypeptide: uncharacterized protein (185 aa).

Over 1–69 (MSSFIDSIKS…SSDCSRAERT (69 aa)) the chain is Cytoplasmic. The helical transmembrane segment at 70-90 (FNLILFAIVDLVICCESMAFF) threads the bilayer. N91 is a topological domain (extracellular). A helical transmembrane segment spans residues 92–112 (LLLKLPSMLLVSFLTMLVFSI). Topologically, residues 113–118 (SYSWSA) are cytoplasmic. A helical transmembrane segment spans residues 119–139 (FNWISFAFSSASFLMKACILF). Residues 140 to 185 (NSSFTWFGVKAVIAEDMLYRMVRGLFCASFVKQLQTTFLATAIVLC) lie on the Extracellular side of the membrane.

The protein resides in the membrane. This is an uncharacterized protein from Saccharomyces cerevisiae (strain ATCC 204508 / S288c) (Baker's yeast).